We begin with the raw amino-acid sequence, 766 residues long: Transcription factor GTE4 (766 aa).

Disordered regions lie at residues 87-108 (GTNSHGDKNLTEAPSENLPGDD), 234-262 (RDTTDAQQPAGLTSDSAHATAAGSMPMEE), and 388-412 (GDKLPPAESNKKSKSSSKKQGGDVG). Residues 238-250 (DAQQPAGLTSDSA) show a composition bias toward polar residues. A Bromo domain is found at 416–522 (GAGTKVFKNC…QIFEERWAVI (107 aa)). 2 disordered regions span residues 544-606 (TMRS…NKRD) and 687-766 (ARAE…SDQT). Residues 574–589 (PTTTPGRTPTSATPSG) are compositionally biased toward low complexity. Residues 597 to 678 (PKANEPNKRD…NYKKGLSKKK (82 aa)) form the NET domain. Positions 736–766 (SRSSSSSSSSSSSSSSDSDSDSSSSSGSDQT) are enriched in low complexity.

As to expression, ubiquitously expressed.

The protein localises to the nucleus. Its function is as follows. Involved in the activation and maintenance of cell division in the meristems and by this controls cell numbers in differentiated organs. Its action in cell cycle regulation may be directed through the RB-E2F pathway. The polypeptide is Transcription factor GTE4 (GTE4) (Arabidopsis thaliana (Mouse-ear cress)).